A 265-amino-acid chain; its full sequence is Metallo-beta-lactamase VIM-7 (265 aa).

A signal peptide spans 1 to 17 (MFQIRSFLVGISAFVMA). Residues His-113, His-115, Asp-117, His-178, Cys-197, and His-239 each coordinate Zn(2+).

This sequence belongs to the metallo-beta-lactamase superfamily. Class-B beta-lactamase family. As to quaternary structure, monomer. Zn(2+) serves as cofactor.

It is found in the periplasm. The catalysed reaction is a beta-lactam + H2O = a substituted beta-amino acid. Class B beta-lactamase which confers resistance to the beta-lactam antibiotics, including penicillins, cephalosporins and carbapenems. Acts via hydrolysis of the beta-lactam ring. Has penicillin-, cephalosporin- and carbapenem-hydrolyzing activities. The sequence is that of Metallo-beta-lactamase VIM-7 from Pseudomonas aeruginosa.